Here is a 628-residue protein sequence, read N- to C-terminus: Protein ETHYLENE INSENSITIVE 3 (628 aa).

A coiled-coil region spans residues 38–68 (EDDYTDDEIDVDELERRMWRDKMRLKRLKEQ). Basic and acidic residues predominate over residues 66 to 79 (KEQDKGKEGVDAAK). The tract at residues 66–92 (KEQDKGKEGVDAAKQRQSQEQARRKKM) is disordered. The DNA-binding domain stretch occupies residues 174–306 (TPHTLQELQD…SLARELYPES (133 aa)).

Belongs to the EIN3 family. As to quaternary structure, acts as a homodimer to bind the primary ethylene response element. Interacts with TAF12B. Interacts with KIN10. Binds to ENAP1 in the presence of ethylene; this reaction facilitates its association with histone. In terms of processing, phosphorylated by KIN10.

The protein localises to the nucleus. With respect to regulation, activated by phosphorylation by MPK3 and MPK6. Down-regulated by KIN10 that controls its protein stability under a phosphorylation-dependent manner. Satnilitzed during hypoxia (e.g. submergences) via a ceramides-triggered and CTR1-dependent manner. Its function is as follows. Transcription factor acting as a positive regulator in the ethylene response pathway, by promoting histone acetylation in an ENAP1-dependent manner, thus accelerating the expression of ethylene-responsive genes. Binds DNA. Is required for ethylene responsiveness in adult plant tissues. Binds a primary ethylene response element present in the ETHYLENE-RESPONSE-FACTOR1 promoter with consequence to activate the transcription of this gene. The polypeptide is Protein ETHYLENE INSENSITIVE 3 (Arabidopsis thaliana (Mouse-ear cress)).